The following is a 388-amino-acid chain: Succinate--CoA ligase [ADP-forming] subunit beta (388 aa).

Residues 9–244 (KQLFAEYGLP…PSQDDAREAH (236 aa)) enclose the ATP-grasp domain. Residues K46, 53 to 55 (GRG), E99, T102, and E107 contribute to the ATP site. 2 residues coordinate Mg(2+): N199 and D213. Substrate contacts are provided by residues N264 and 321 to 323 (GIV).

The protein belongs to the succinate/malate CoA ligase beta subunit family. Heterotetramer of two alpha and two beta subunits. Mg(2+) serves as cofactor.

The catalysed reaction is succinate + ATP + CoA = succinyl-CoA + ADP + phosphate. It carries out the reaction GTP + succinate + CoA = succinyl-CoA + GDP + phosphate. The protein operates within carbohydrate metabolism; tricarboxylic acid cycle; succinate from succinyl-CoA (ligase route): step 1/1. Functionally, succinyl-CoA synthetase functions in the citric acid cycle (TCA), coupling the hydrolysis of succinyl-CoA to the synthesis of either ATP or GTP and thus represents the only step of substrate-level phosphorylation in the TCA. The beta subunit provides nucleotide specificity of the enzyme and binds the substrate succinate, while the binding sites for coenzyme A and phosphate are found in the alpha subunit. The protein is Succinate--CoA ligase [ADP-forming] subunit beta of Pseudomonas entomophila (strain L48).